The primary structure comprises 1081 residues: Dyslexia-associated protein KIAA0319 homolog (1081 aa).

Residues 1 to 22 (MVSPPGVLSSLLLLAAMAGGSS) form the signal peptide. One can recognise an MANSC domain in the interval 23 to 99 (QQCSEGRTYS…PRTTGPIRSY (77 aa)). At 23 to 964 (QQCSEGRTYS…WDGESNCEWS (942 aa)) the chain is on the extracellular side. Disordered regions lie at residues 141-160 (LPFL…SDDY), 168-216 (LQPS…DLTP), and 228-298 (NEST…TTVE). Polar residues-rich tracts occupy residues 197 to 209 (ASAT…ASTE), 228 to 253 (NEST…TASP), and 283 to 298 (HNPS…TTVE). PKD domains are found at residues 345–436 (AVSA…VMPA), 444–533 (VAIV…IRGS), 539–629 (VANA…VQAE), 630–723 (NNQA…VKKE), and 729–820 (RAQA…VLPD). N-linked (GlcNAc...) asparagine glycans are attached at residues Asn-430 and Asn-522. Residues 965-985 (VFYVAALALTLTVLTGAVTWV) form a helical membrane-spanning segment. The Cytoplasmic segment spans residues 986 to 1081 (CICCCRRRKR…VSFGYYSKDR (96 aa)). The short motif at 1004 to 1007 (YTIL) is the Endocytosis signal element.

In terms of assembly, homodimer. Interacts with AP2M1; required for clathrin-mediated endocytosis. Post-translationally, N-glycosylated. In terms of processing, O-glycosylated. Shedding of the extracellular domain and intramembrane cleavage produce several proteolytic products. The intramembrane cleavage releases a soluble cytoplasmic polypeptide that translocates to the nucleolus. As to expression, highly expressed during development in ventricular zone, intermediate zone, cortical plate, striatum, hippocampus, and brain stem.

It is found in the cell membrane. The protein localises to the early endosome membrane. Its function is as follows. Involved in neuronal migration during development of the cerebral neocortex. May function in a cell autonomous and a non-cell autonomous manner and play a role in appropriate adhesion between migrating neurons and radial glial fibers. May also regulate growth and differentiation of dendrites. The protein is Dyslexia-associated protein KIAA0319 homolog of Rattus norvegicus (Rat).